The chain runs to 292 residues: 4-hydroxy-tetrahydrodipicolinate synthase (292 aa).

Thr45 is a binding site for pyruvate. Tyr133 (proton donor/acceptor) is an active-site residue. The active-site Schiff-base intermediate with substrate is Lys161. Residue Ile203 coordinates pyruvate.

Belongs to the DapA family. Homotetramer; dimer of dimers.

The protein resides in the cytoplasm. It carries out the reaction L-aspartate 4-semialdehyde + pyruvate = (2S,4S)-4-hydroxy-2,3,4,5-tetrahydrodipicolinate + H2O + H(+). It participates in amino-acid biosynthesis; L-lysine biosynthesis via DAP pathway; (S)-tetrahydrodipicolinate from L-aspartate: step 3/4. Catalyzes the condensation of (S)-aspartate-beta-semialdehyde [(S)-ASA] and pyruvate to 4-hydroxy-tetrahydrodipicolinate (HTPA). The protein is 4-hydroxy-tetrahydrodipicolinate synthase of Vibrio vulnificus (strain CMCP6).